Reading from the N-terminus, the 138-residue chain is Protein transport protein got1 homolog (138 aa).

Over 1-7 (MFTDQQK) the chain is Cytoplasmic. The helical transmembrane segment at 8-28 (IGAMLSAMGLFFGFLGVLLFL) threads the bilayer. Over 29 to 30 (DR) the chain is Lumenal. A helical transmembrane segment spans residues 31 to 51 (NLLALGNLLLVSGIVLILGLQ). Residues 52–62 (KTTKFFAQKKK) are Cytoplasmic-facing. A helical membrane pass occupies residues 63-82 (IKGTILFFFGIVVLLVTRWT). At 83–87 (FVGMV) the chain is on the lumenal side. Residues 88 to 108 (IEIFGFVNLFGDAFPIVISIL) form a helical membrane-spanning segment. The Cytoplasmic portion of the chain corresponds to 109-138 (RKLPIIGNILNHPLVNRLLQKADSGNELPF).

Belongs to the GOT1 family.

It is found in the golgi apparatus membrane. Functionally, may be involved in fusion of ER-derived transport vesicles with the Golgi complex. The chain is Protein transport protein got1 homolog (golt1) from Dictyostelium discoideum (Social amoeba).